We begin with the raw amino-acid sequence, 347 residues long: MEVTALRRSAALVARASSQNAIRPAVCAAISSTSPTPPTQIQTQQTRQFSALNRPPPNYPGHVPLTRLERFGLFVGSGLISLADPLRGDLIASFAEATATPYFIYRLRDAMLSHPTGRRILRQRPRITSQSLNIPYLRSLPPNTVGRTYIDWLDREGVSPDTRSAVRYIDDEECAYVMQRYRECHDFYHALTGLPIVREGEVALKAFEFANTLLPMTGFSVFAAFTMKKSEQKRFRKIYFPWAVKNGLRAKEVINVFWEEELERDVNDLRRELGVEPPPDLREIRKREREEKRRRKEMERMLSGRGTEDVIQKAEKEAEVVAERVKEMRNEVVEKVGEVVGSSAMRG.

The transit peptide at 1–49 (MEVTALRRSAALVARASSQNAIRPAVCAAISSTSPTPPTQIQTQQTRQF) directs the protein to the mitochondrion. 4 residues coordinate Zn(2+): His185, Asp186, His189, and Glu201. Residues 284-310 (IRKREREEKRRRKEMERMLSGRGTEDV) are disordered.

It belongs to the COQ4 family. In terms of assembly, component of a multi-subunit COQ enzyme complex, composed of at least coq-3, coq-4, coq-5, coq-6, coq-7 and coq-9. Zn(2+) serves as cofactor.

It is found in the mitochondrion inner membrane. The catalysed reaction is a 4-hydroxy-3-methoxy-5-(all-trans-polyprenyl)benzoate + H(+) = a 2-methoxy-6-(all-trans-polyprenyl)phenol + CO2. Its pathway is cofactor biosynthesis; ubiquinone biosynthesis. Its function is as follows. Lyase that catalyzes the C1-decarboxylation of 4-hydroxy-3-methoxy-5-(all-trans-polyprenyl)benzoic acid into 2-methoxy-6-(all-trans-polyprenyl)phenol during ubiquinone biosynthesis. This Neurospora crassa (strain ATCC 24698 / 74-OR23-1A / CBS 708.71 / DSM 1257 / FGSC 987) protein is Ubiquinone biosynthesis protein coq-4, mitochondrial.